We begin with the raw amino-acid sequence, 902 residues long: Translation initiation factor IF-2 (902 aa).

The segment covering 137–177 (NLDEQQRLAESDRARDEAIQRKRDEEQAAKDRVEAERKAAE) has biased composition (basic and acidic residues). 2 disordered regions span residues 137-248 (NLDE…SHVM) and 266-314 (HLSA…ERPT). Composition is skewed to low complexity over residues 178-229 (EAAA…ATPA) and 279-291 (RGKP…SSSS). A tr-type G domain is found at 401–570 (SRPPVVTIMG…SLQAEVLELK (170 aa)). Residues 410-417 (GHVDHGKT) form a G1 region. 410–417 (GHVDHGKT) provides a ligand contact to GTP. A G2 region spans residues 435–439 (GITQH). Residues 456–459 (DTPG) form a G3 region. GTP contacts are provided by residues 456–460 (DTPGH) and 510–513 (NKID). The segment at 510–513 (NKID) is G4. The G5 stretch occupies residues 546 to 548 (SAK).

This sequence belongs to the TRAFAC class translation factor GTPase superfamily. Classic translation factor GTPase family. IF-2 subfamily.

It localises to the cytoplasm. One of the essential components for the initiation of protein synthesis. Protects formylmethionyl-tRNA from spontaneous hydrolysis and promotes its binding to the 30S ribosomal subunits. Also involved in the hydrolysis of GTP during the formation of the 70S ribosomal complex. This is Translation initiation factor IF-2 from Xanthomonas campestris pv. campestris (strain 8004).